The primary structure comprises 146 residues: Large ribosomal subunit protein uL13 (146 aa).

The interval Ala-126–Gly-146 is disordered.

It belongs to the universal ribosomal protein uL13 family. In terms of assembly, part of the 50S ribosomal subunit.

In terms of biological role, this protein is one of the early assembly proteins of the 50S ribosomal subunit, although it is not seen to bind rRNA by itself. It is important during the early stages of 50S assembly. This chain is Large ribosomal subunit protein uL13, found in Roseiflexus castenholzii (strain DSM 13941 / HLO8).